A 632-amino-acid polypeptide reads, in one-letter code: ATP-dependent zinc metalloprotease FtsH (632 aa).

Residues 1–9 lie on the Cytoplasmic side of the membrane; it reads MKPTNEPKK. Residues 10 to 30 traverse the membrane as a helical segment; the sequence is PFFQSPIILAVLGGILLIFFL. Residues 31-116 are Periplasmic-facing; the sequence is RSFNSDGSFS…INYSGFSESN (86 aa). The chain crosses the membrane as a helical span at residues 117–137; that stretch reads FFTDMLGWLMPILVILGLWMF. The Cytoplasmic portion of the chain corresponds to 138–632; sequence MANRMQKNMG…RLIPLEEQAS (495 aa). Residues Ala-173, 213–217, and His-354 contribute to the ATP site; that span reads GTGKT. Residue His-434 coordinates Zn(2+). Residue Glu-435 is part of the active site. Zn(2+)-binding residues include His-438 and Asp-511.

It in the central section; belongs to the AAA ATPase family. This sequence in the C-terminal section; belongs to the peptidase M41 family. As to quaternary structure, homohexamer. Requires Zn(2+) as cofactor.

It is found in the cell inner membrane. Its function is as follows. Acts as a processive, ATP-dependent zinc metallopeptidase for both cytoplasmic and membrane proteins. Plays a role in the quality control of integral membrane proteins. The chain is ATP-dependent zinc metalloprotease FtsH from Helicobacter pylori (strain ATCC 700392 / 26695) (Campylobacter pylori).